The following is a 375-amino-acid chain: MENFPTEYFLNTSVRLLEYIRYRDSNYTREERIENLHYAYNKAAHHFAQPRQQKMLKVDPKRLQASLQTIVGMVVYSWAKVSKECMADLSIHYTYTLVLDDSSDDPHPAMVNYFDDLQAGREQAHPWWALVNEHFPNVLRHFGPFCSLNLIRSTMDFFEGCWIEQYNFGGFPGSDDYPQFLRRMNGLGHCVGASLWPKDLFDERKNFLEITTAVAQMENWMVWVNDLMSFYKEFDDERDQISLVKNFVTCHEITLDEALEKLTQETLHSSKQMVAVFADKDPQVMDTIECFMHGYVTWHLCDARYRLHEIYEKVKDQDTEDAKKFCKFFEQAANVGAVAASEWAYPPVAQLANVRAKSDVKEAQKPFLSSIELVE.

Belongs to the trichodiene synthase family.

The enzyme catalyses (2E,6E)-farnesyl diphosphate = trichodiene + diphosphate. The protein operates within sesquiterpene biosynthesis; trichothecene biosynthesis. TS is a member of the terpene cyclase group of enzymes. It catalyzes the isomerization and cyclization of farnesyl pyro-phosphate to form trichodiene, the first cyclic intermediate in the biosynthetic pathway for trichothecenes. It serves to branch trichothecene biosynthesis from the isoprenoid pathway. This chain is Trichodiene synthase (TRI5), found in Fusarium cerealis (Fusarium crookwellense).